The chain runs to 172 residues: Large ribosomal subunit protein uL10 (172 aa).

This sequence belongs to the universal ribosomal protein uL10 family. Part of the ribosomal stalk of the 50S ribosomal subunit. The N-terminus interacts with L11 and the large rRNA to form the base of the stalk. The C-terminus forms an elongated spine to which L12 dimers bind in a sequential fashion forming a multimeric L10(L12)X complex.

Functionally, forms part of the ribosomal stalk, playing a central role in the interaction of the ribosome with GTP-bound translation factors. The polypeptide is Large ribosomal subunit protein uL10 (rplJ) (Liberibacter africanus subsp. capensis).